We begin with the raw amino-acid sequence, 669 residues long: Elongation factor G-like protein (669 aa).

Residues 7–279 form the tr-type G domain; that stretch reads ESLRNVAIVG…VLIKEAPDPS (273 aa). Residues 16–23 are G1; that stretch reads GPYGSGKT. GTP is bound at residue 16-23; the sequence is GPYGSGKT. A G2 region spans residues 59 to 63; that stretch reads QMSVE. The segment at 80–83 is G3; sequence DCPG. Residues 80-84 and 134-137 each bind GTP; these read DCPGS and NKMD. A G4 region spans residues 134-137; the sequence is NKMD. The segment at 257-259 is G5; that stretch reads AAE.

Belongs to the TRAFAC class translation factor GTPase superfamily. Classic translation factor GTPase family. EF-G/EF-2 subfamily.

The chain is Elongation factor G-like protein from Synechocystis sp. (strain ATCC 27184 / PCC 6803 / Kazusa).